The primary structure comprises 237 residues: Dihydroceramide fatty acyl 2-hydroxylase FAH2 (237 aa).

The next 2 helical transmembrane spans lie at 54–74 (VWWA…SISA) and 77–97 (GLTF…WTLL). Zn(2+) is bound by residues histidine 102, histidine 107, histidine 123, histidine 126, and histidine 127. 2 consecutive transmembrane segments (helical) span residues 134–154 (LRLV…WKLL) and 156–176 (LLAT…GYVM). Residues histidine 181, histidine 185, histidine 201, histidine 204, and histidine 205 each contribute to the Zn(2+) site.

It belongs to the sterol desaturase family. As to quaternary structure, interacts with CYTB5-A, CYTB5-B, CYTB5-C and CYTB5-D. Requires Zn(2+) as cofactor. As to expression, expressed in leaves, roots, flowers and seeds.

The protein resides in the endoplasmic reticulum membrane. It carries out the reaction an N-(1,2-saturated acyl)sphinganine + 2 Fe(II)-[cytochrome b5] + O2 + 2 H(+) = an N-[(2'R)-hydroxyacyl]sphinganine + 2 Fe(III)-[cytochrome b5] + H2O. Fatty acid 2-hydroxylase involved in the alpha-hydroxylation of the long-chain fatty acid (LCFA) palmitic acid. Probably involved in the resistance response to oxidative stress. In Arabidopsis thaliana (Mouse-ear cress), this protein is Dihydroceramide fatty acyl 2-hydroxylase FAH2.